The sequence spans 288 residues: Movement protein (288 aa).

This sequence belongs to the cucumovirus movement protein family.

The protein resides in the host cell junction. Its subcellular location is the host plasmodesma. Functionally, transports viral genome to neighboring plant cells directly through plasmosdesmata, without any budding. The movement protein allows efficient cell to cell propagation, by bypassing the host cell wall barrier. Acts by forming a tubular structure at the host plasmodesmata, enlarging it enough to allow free passage of virion capsids. This chain is Movement protein, found in Apium graveolens (Celery).